Here is a 277-residue protein sequence, read N- to C-terminus: Urease accessory protein UreD (277 aa).

The protein belongs to the UreD family. In terms of assembly, ureD, UreF and UreG form a complex that acts as a GTP-hydrolysis-dependent molecular chaperone, activating the urease apoprotein by helping to assemble the nickel containing metallocenter of UreC. The UreE protein probably delivers the nickel.

The protein resides in the cytoplasm. Its function is as follows. Required for maturation of urease via the functional incorporation of the urease nickel metallocenter. This Pseudomonas putida (strain GB-1) protein is Urease accessory protein UreD.